The chain runs to 710 residues: Forkhead box protein P2 (710 aa).

Polar residues predominate over residues 1–28; that stretch reads MMQESATETISNSSMNQNGMSTLSSQLD. Disordered stretches follow at residues 1 to 44 and 272 to 334; these read MMQE…SSEV and HSQE…TGAS. Residues 273 to 283 show a composition bias toward basic and acidic residues; that stretch reads SQEDNGIKHGG. Residues 287 to 300 are compositionally biased toward low complexity; sequence TTNNSSSTTSSTTS. Polar residues predominate over residues 310–319; sequence SIVNGQSSVL. The span at 321 to 332 shows a compositional bias: basic and acidic residues; that stretch reads ARRDSSSHEETG. Residues 343–366 form a C2H2-type zinc finger; the sequence is CKWPGCESICEDFGQFLKHLNNEH. The interval 383 to 404 is leucine-zipper; that stretch reads VQQLEIQLSKERERLQAMMTHL. The CTBP1-binding stretch occupies residues 417-421; that stretch reads PLNLV. Positions 433–454 are enriched in low complexity; the sequence is TSPQSLPQTPTTPTAPVTPITQ. The segment at 433–460 is disordered; that stretch reads TSPQSLPQTPTTPTAPVTPITQGPSVIT. Residues 499–589 constitute a DNA-binding region (fork-head); that stretch reads RPPFTYATLI…SQKITGSPTL (91 aa). 2 disordered regions span residues 644 to 663 and 673 to 710; these read LDHI…QPHI and VIAE…EDLE. The span at 694–710 shows a compositional bias: acidic residues; it reads LEDDREIEEEPLSEDLE.

Forms homodimers and heterodimers with FOXP1 and FOXP4. Dimerization is required for DNA-binding. Interacts with CTBP1. Interacts with FOXP1. Interacts with TBR1. Interacts with ZMYM2.

The protein resides in the nucleus. Its function is as follows. Transcriptional repressor that may play a role in the specification and differentiation of lung epithelium. May also play a role in developing neural, gastrointestinal and cardiovascular tissues. Can act with CTBP1 to synergistically repress transcription but CTPBP1 is not essential. Plays a role in synapse formation by regulating SRPX2 levels. This Rattus norvegicus (Rat) protein is Forkhead box protein P2 (Foxp2).